A 636-amino-acid chain; its full sequence is DNA gyrase subunit B (636 aa).

The Toprim domain maps to 421–535 (TELFIVEGDS…QGRVYIALPP (115 aa)). Mg(2+) contacts are provided by glutamate 427, aspartate 500, and aspartate 502.

This sequence belongs to the type II topoisomerase GyrB family. Heterotetramer, composed of two GyrA and two GyrB chains. In the heterotetramer, GyrA contains the active site tyrosine that forms a transient covalent intermediate with DNA, while GyrB binds cofactors and catalyzes ATP hydrolysis. The cofactor is Mg(2+). Mn(2+) serves as cofactor. It depends on Ca(2+) as a cofactor.

It is found in the cytoplasm. It catalyses the reaction ATP-dependent breakage, passage and rejoining of double-stranded DNA.. A type II topoisomerase that negatively supercoils closed circular double-stranded (ds) DNA in an ATP-dependent manner to modulate DNA topology and maintain chromosomes in an underwound state. Negative supercoiling favors strand separation, and DNA replication, transcription, recombination and repair, all of which involve strand separation. Also able to catalyze the interconversion of other topological isomers of dsDNA rings, including catenanes and knotted rings. Type II topoisomerases break and join 2 DNA strands simultaneously in an ATP-dependent manner. The polypeptide is DNA gyrase subunit B (Thermotoga maritima (strain ATCC 43589 / DSM 3109 / JCM 10099 / NBRC 100826 / MSB8)).